Reading from the N-terminus, the 262-residue chain is MSVVHKACLIALLFVSSGVAQQCMDSASDCAANAGSCFTRPVSQVLQNRCQRTCNTCDCRDEANNCAASINLCQNPTFEPLVRDRCQKTCGLCAGCGFISSGIVPLVVTSAPSRRVSVTFANNVQVNCGNTLTTAQVANQPTVTWEAQPNDRYTLIMVDPDFPSAANGQQGQRLHWWVINIPGNNIAGGTTLAAFQPSTPAANTGVHRYVFLVYRQPAAINSPLLNNLVVQDSERPGFGTTAFATQFNLGSPYAGNFYRSQA.

A signal peptide spans Met-1–Gln-21. 2 consecutive ShKT domains span residues Cys-23–Cys-57 and Cys-59–Cys-93. Cystine bridges form between Cys-23–Cys-57, Cys-30–Cys-50, Cys-37–Cys-54, Cys-59–Cys-93, Cys-66–Cys-86, and Cys-73–Cys-90.

Belongs to the phosphatidylethanolamine-binding protein family.

The protein resides in the secreted. Binds phosphatidylethanolamine. In Toxocara canis (Canine roundworm), this protein is 26 kDa secreted antigen (TES-26).